The sequence spans 268 residues: Ubiquinone biosynthesis protein COQ4 homolog, mitochondrial (268 aa).

4 residues coordinate Zn(2+): His-171, Asp-172, His-175, and Glu-187.

This sequence belongs to the COQ4 family. Component of a multi-subunit COQ enzyme complex. The cofactor is Zn(2+).

The protein localises to the mitochondrion inner membrane. It catalyses the reaction a 4-hydroxy-3-methoxy-5-(all-trans-polyprenyl)benzoate + H(+) = a 2-methoxy-6-(all-trans-polyprenyl)phenol + CO2. Its pathway is cofactor biosynthesis; ubiquinone biosynthesis. Lyase that catalyzes the C1-decarboxylation of 4-hydroxy-3-methoxy-5-(all-trans-polyprenyl)benzoic acid into 2-methoxy-6-(all-trans-polyprenyl)phenol during ubiquinone biosynthesis. The polypeptide is Ubiquinone biosynthesis protein COQ4 homolog, mitochondrial (Drosophila yakuba (Fruit fly)).